The primary structure comprises 141 residues: Hemoglobin subunit alpha (141 aa).

Residues Val-1–Arg-141 enclose the Globin domain. At Ser-3 the chain carries Phosphoserine. An N6-succinyllysine mark is found at Lys-7 and Lys-11. Lys-16 carries the N6-acetyllysine; alternate modification. Residue Lys-16 is modified to N6-succinyllysine; alternate. Phosphotyrosine is present on Tyr-24. Ser-35 carries the phosphoserine modification. The residue at position 40 (Lys-40) is an N6-succinyllysine. His-58 is an O2 binding site. A heme b-binding site is contributed by His-87. At Ser-102 the chain carries Phosphoserine. The residue at position 108 (Thr-108) is a Phosphothreonine. A phosphoserine mark is found at Ser-124 and Ser-131. Residues Thr-134 and Thr-137 each carry the phosphothreonine modification. Residue Ser-138 is modified to Phosphoserine.

The protein belongs to the globin family. Heterotetramer of two alpha chains and two beta chains. Red blood cells.

Functionally, involved in oxygen transport from the lung to the various peripheral tissues. Its function is as follows. Hemopressin acts as an antagonist peptide of the cannabinoid receptor CNR1. Hemopressin-binding efficiently blocks cannabinoid receptor CNR1 and subsequent signaling. This Macrotus californicus (Californian leaf-nosed bat) protein is Hemoglobin subunit alpha (HBA).